The primary structure comprises 443 residues: Probable D-serine dehydratase (443 aa).

Lys118 is modified (N6-(pyridoxal phosphate)lysine).

The protein belongs to the serine/threonine dehydratase family. DsdA subfamily. The cofactor is pyridoxal 5'-phosphate.

The enzyme catalyses D-serine = pyruvate + NH4(+). The polypeptide is Probable D-serine dehydratase (Aeromonas salmonicida (strain A449)).